The following is a 461-amino-acid chain: Epidermin leader peptide-processing serine protease EpiP (461 aa).

Residues 1–23 form the signal peptide; sequence MNKFKFFIVFLILSLVFLQNEYA. The Peptidase S8 domain occupies 121–459; that stretch reads QWDMRKITNE…NGKLDVYKLL (339 aa). Residues D149, H194, and S402 each act as charge relay system in the active site.

This sequence belongs to the peptidase S8 family.

It participates in antibiotic biosynthesis; epidermin biosynthesis. Functionally, protease which cleaves the matured lantibiotic from the modified prepeptide. The protein is Epidermin leader peptide-processing serine protease EpiP (epiP) of Staphylococcus epidermidis.